Here is a 316-residue protein sequence, read N- to C-terminus: uncharacterized protein (316 aa).

Belongs to the chlamydial CPn_0441/CT_007/TC_0275 family.

This is an uncharacterized protein from Chlamydia trachomatis serovar D (strain ATCC VR-885 / DSM 19411 / UW-3/Cx).